A 230-amino-acid chain; its full sequence is Probable methylthioribulose-1-phosphate dehydratase (230 aa).

Residue Cys87 coordinates substrate. Zn(2+) is bound by residues His105 and His107. Glu129 acts as the Proton donor/acceptor in catalysis. A Zn(2+)-binding site is contributed by His185.

The protein belongs to the aldolase class II family. MtnB subfamily. The cofactor is Zn(2+).

The protein resides in the cytoplasm. It catalyses the reaction 5-(methylsulfanyl)-D-ribulose 1-phosphate = 5-methylsulfanyl-2,3-dioxopentyl phosphate + H2O. It participates in amino-acid biosynthesis; L-methionine biosynthesis via salvage pathway; L-methionine from S-methyl-5-thio-alpha-D-ribose 1-phosphate: step 2/6. Functionally, catalyzes the dehydration of methylthioribulose-1-phosphate (MTRu-1-P) into 2,3-diketo-5-methylthiopentyl-1-phosphate (DK-MTP-1-P). The chain is Probable methylthioribulose-1-phosphate dehydratase from Drosophila grimshawi (Hawaiian fruit fly).